The primary structure comprises 147 residues: CLAVATA3/ESR (CLE)-related protein 4C (147 aa).

Positions 1-21 (MATNTMLCLFVISVVLALAFA) are cleaved as a signal peptide. A required for secretion from the host cytoplasm to the host apoplasm region spans residues 21–83 (ATNKKGDEEP…SNQLPNNNWM (63 aa)). Asn32 carries an N-linked (GlcNAc...) asparagine glycan. Disordered regions lie at residues 57–86 (GADA…MAPP) and 116–147 (RKTG…PIHH). The span at 125-137 (HHEETTLEQEKRV) shows a compositional bias: basic and acidic residues. Positions 136 to 147 (RVAGAGPDPIHH) match the CLE motif.

It belongs to the CLV3/ESR signal peptide family. Highly expressed exclusively within the dorsal esophageal gland cell during syncytium formation in host plants.

The protein localises to the secreted. It localises to the host cytoplasm. The protein resides in the host extracellular space. It is found in the extracellular space. Its subcellular location is the apoplast. Its function is as follows. Mimics host plant CLE extracellular signal peptides that regulate cell fate. May play a role in the differentiation or division of feeding cells (syncytia) induced in plant roots during infection. The polypeptide is CLAVATA3/ESR (CLE)-related protein 4C (CLE-4C) (Globodera rostochiensis (Golden nematode worm)).